Here is a 341-residue protein sequence, read N- to C-terminus: tRNA N6-adenosine threonylcarbamoyltransferase (341 aa).

Positions 118 and 122 each coordinate Fe cation. Substrate is bound by residues 141–145 (LVSGG), Asp174, Gly187, and Asn281. Asp309 is a Fe cation binding site.

This sequence belongs to the KAE1 / TsaD family. The cofactor is Fe(2+).

It is found in the cytoplasm. It catalyses the reaction L-threonylcarbamoyladenylate + adenosine(37) in tRNA = N(6)-L-threonylcarbamoyladenosine(37) in tRNA + AMP + H(+). Functionally, required for the formation of a threonylcarbamoyl group on adenosine at position 37 (t(6)A37) in tRNAs that read codons beginning with adenine. Is involved in the transfer of the threonylcarbamoyl moiety of threonylcarbamoyl-AMP (TC-AMP) to the N6 group of A37, together with TsaE and TsaB. TsaD likely plays a direct catalytic role in this reaction. In Desulfitobacterium hafniense (strain Y51), this protein is tRNA N6-adenosine threonylcarbamoyltransferase.